The primary structure comprises 72 residues: MLTLKKSMLLLFFLGLVSVSLADDKREDEAEEGEDKRAAEEERNVEKRCYSAAKYPGFQEFINRKYKSSRFG.

The signal sequence occupies residues Met-1–Ala-22. The propeptide occupies Asp-23–Arg-48. Phe-71 bears the Phenylalanine amide mark.

It belongs to the frog skin active peptide (FSAP) family. Brevinin subfamily. As to quaternary structure, homodimer; disulfide-linked. In terms of tissue distribution, expressed by the skin glands.

It localises to the secreted. Antibacterial activity against the Gram-positive bacterium M.luteus and the Gram-negative bacterium E.coli. In Kassina senegalensis (Senegal running frog), this protein is Galensin.